Here is a 546-residue protein sequence, read N- to C-terminus: Probable Xaa-Pro aminopeptidase pepP (546 aa).

4 residues coordinate Mn(2+): D341, D352, E475, and E515.

It belongs to the peptidase M24B family. Mn(2+) serves as cofactor.

The catalysed reaction is Release of any N-terminal amino acid, including proline, that is linked to proline, even from a dipeptide or tripeptide.. Catalyzes the removal of a penultimate prolyl residue from the N-termini of peptides. The protein is Probable Xaa-Pro aminopeptidase pepP (pepP) of Sclerotinia sclerotiorum (strain ATCC 18683 / 1980 / Ss-1) (White mold).